The following is a 430-amino-acid chain: Trigger factor (430 aa).

The PPIase FKBP-type domain maps to 163 to 248; the sequence is GNIAIIDFKG…VKEIKVKEIP (86 aa).

It belongs to the FKBP-type PPIase family. Tig subfamily.

The protein localises to the cytoplasm. It carries out the reaction [protein]-peptidylproline (omega=180) = [protein]-peptidylproline (omega=0). In terms of biological role, involved in protein export. Acts as a chaperone by maintaining the newly synthesized protein in an open conformation. Functions as a peptidyl-prolyl cis-trans isomerase. This chain is Trigger factor, found in Clostridium kluyveri (strain NBRC 12016).